Here is a 402-residue protein sequence, read N- to C-terminus: 5-methylphenazine-1-carboxylate 1-monooxygenase (402 aa).

FAD is bound by residues 14-15 (IG), 35-36 (ES), 43-45 (LGV), Arg-106, Val-132, Arg-191, and Asp-310. A compositionally biased stretch (basic and acidic residues) spans 368–385 (REKEEWAAASRPKTEKSA). The segment at 368–402 (REKEEWAAASRPKTEKSAALEAITGSYRNQVERPR) is disordered.

As to quaternary structure, monomer in solution. Probably interacts transiently with PhzM. Requires FAD as cofactor.

The catalysed reaction is 5-methyl-phenazine-1-carboxylate + NADH + O2 + 2 H(+) = pyocyanin + CO2 + NAD(+) + H2O. The protein operates within secondary metabolite biosynthesis; pyocyanine biosynthesis. Functionally, involved in the biosynthesis of pyocyanine, a blue-pigmented phenazine derivative, which plays a role in virulence. Catalyzes the oxidative decarboxylation of 5-methylphenazine-1-carboxylate (5-methyl-PCA) to pyocyanine. Can also act on phenazine-1-carboxylate (PCA), converting it into 1-hydroxyphenazine (1-HP). However, PCA is a poor substrate. This chain is 5-methylphenazine-1-carboxylate 1-monooxygenase, found in Pseudomonas aeruginosa (strain ATCC 15692 / DSM 22644 / CIP 104116 / JCM 14847 / LMG 12228 / 1C / PRS 101 / PAO1).